The chain runs to 234 residues: MTKIAMANFKSAMPIFKSHAYLKELEKTLKPQHFDRVFVFPDFLGLLPNSFLHFTLGAQNAYPRDCGAFTGEITSKHLEELKIHTLLIGHSERRTLLKESPSFLKEKFDFFKDKNFKIVYCIGEDLTTREKGFRAVKEFLSEQLENIDLNYSNLIVAYEPIWAIGTKKSASLEDIYLTHGFLKQILNQKTPLLYGGSVNVQNAKEILGIDSVDGLLIGSASWELENFKTIISFL.

Position 8 to 10 (8 to 10 (NFK)) interacts with substrate. Residue H90 is the Electrophile of the active site. Catalysis depends on E159, which acts as the Proton acceptor. Substrate-binding residues include G165 and S197.

This sequence belongs to the triosephosphate isomerase family. Homodimer.

It localises to the cytoplasm. It catalyses the reaction D-glyceraldehyde 3-phosphate = dihydroxyacetone phosphate. The protein operates within carbohydrate biosynthesis; gluconeogenesis. It functions in the pathway carbohydrate degradation; glycolysis; D-glyceraldehyde 3-phosphate from glycerone phosphate: step 1/1. In terms of biological role, involved in the gluconeogenesis. Catalyzes stereospecifically the conversion of dihydroxyacetone phosphate (DHAP) to D-glyceraldehyde-3-phosphate (G3P). In Helicobacter pylori (strain P12), this protein is Triosephosphate isomerase.